A 291-amino-acid polypeptide reads, in one-letter code: ATP synthase gamma chain (291 aa).

This sequence belongs to the ATPase gamma chain family. In terms of assembly, F-type ATPases have 2 components, CF(1) - the catalytic core - and CF(0) - the membrane proton channel. CF(1) has five subunits: alpha(3), beta(3), gamma(1), delta(1), epsilon(1). CF(0) has three main subunits: a, b and c.

It localises to the cell membrane. Its function is as follows. Produces ATP from ADP in the presence of a proton gradient across the membrane. The gamma chain is believed to be important in regulating ATPase activity and the flow of protons through the CF(0) complex. This is ATP synthase gamma chain from Lachnoclostridium phytofermentans (strain ATCC 700394 / DSM 18823 / ISDg) (Clostridium phytofermentans).